The sequence spans 211 residues: Protein-L-isoaspartate O-methyltransferase (211 aa).

S60 is a catalytic residue.

Belongs to the methyltransferase superfamily. L-isoaspartyl/D-aspartyl protein methyltransferase family.

It localises to the cytoplasm. The catalysed reaction is [protein]-L-isoaspartate + S-adenosyl-L-methionine = [protein]-L-isoaspartate alpha-methyl ester + S-adenosyl-L-homocysteine. In terms of biological role, catalyzes the methyl esterification of L-isoaspartyl residues in peptides and proteins that result from spontaneous decomposition of normal L-aspartyl and L-asparaginyl residues. It plays a role in the repair and/or degradation of damaged proteins. The protein is Protein-L-isoaspartate O-methyltransferase of Pseudomonas fluorescens (strain Pf0-1).